The primary structure comprises 357 residues: Endo-1,4-beta-xylanase Xyn11B (357 aa).

A signal peptide spans 1–27; that stretch reads MKIFQNTKNVIVSIAWAAALCTSAVSA. The GH11 domain maps to 29–226; that stretch reads TLTSNSTGTN…SRGSSDITVS (198 aa). The active-site Nucleophile is Glu-116. Glu-213 acts as the Proton donor in catalysis. The interval 220–245 is disordered; sequence SSDITVSQGGSSGGGNSSSSSSASGG.

It belongs to the glycosyl hydrolase 11 (cellulase G) family.

The protein localises to the secreted. It catalyses the reaction Endohydrolysis of (1-&gt;4)-beta-D-xylosidic linkages in xylans.. The protein operates within glycan degradation; xylan degradation. Functionally, endo-acting xylanase which specifically cleaves internal linkages on the xylan backbone, releasing xylooligosaccharides. Is able to hydrolyze glucuronoxylan and the arabinoxylan from wheat. This chain is Endo-1,4-beta-xylanase Xyn11B (xyn11B), found in Cellvibrio japonicus (Pseudomonas fluorescens subsp. cellulosa).